Reading from the N-terminus, the 347-residue chain is Ribosomal RNA small subunit methyltransferase C (347 aa).

This sequence belongs to the methyltransferase superfamily. RsmC family. As to quaternary structure, monomer.

It is found in the cytoplasm. The enzyme catalyses guanosine(1207) in 16S rRNA + S-adenosyl-L-methionine = N(2)-methylguanosine(1207) in 16S rRNA + S-adenosyl-L-homocysteine + H(+). Its function is as follows. Specifically methylates the guanine in position 1207 of 16S rRNA in the 30S particle. The sequence is that of Ribosomal RNA small subunit methyltransferase C from Yersinia enterocolitica serotype O:8 / biotype 1B (strain NCTC 13174 / 8081).